Reading from the N-terminus, the 456-residue chain is MLADSLVEEFEIREDEPWYDQQDLQQDLHLAAELGKTLLDRNTELEESLQQMYATNQEQLQEIEYLTKQVELLRQMNDQHAKVYEQLDVTARELEDTNQKLVAESRASQQKILSLTETIENLQTHVDDLQRQVEELKKSGRGRMNHERSDQPRSMHSFSCLKELYDLRQYFVYDHVFAEKITSMDSQLNPLEEENENLKKAVTVLQAQLTLEKEKRVTMEEEYSLVVKENCDLEQRLVDIDLYRARAEELEVEVAEMRQMLQSENTIHSAEKLVPESFFISFKESLERELGQSPADDGLLTVPELDKKALKRSSSENFLSSAAGGDILRGHEETCIRRAEAVKQRGISVLNEVDAQYNALKVKYEELLKKCQIDEDSLKHKAVQTLKQYSKDSVGNTQYDLSANNQEFTNAGELLSSTNTLPEYKALFKEIFSCIKKTKEEIDEHRSKYKSLSSQP.

3 coiled-coil regions span residues 38 to 142, 178 to 268, and 348 to 376; these read LLDR…SGRG, AEKI…NTIH, and SVLN…IDED.

Belongs to the CDR2 family.

The polypeptide is Cerebellar degeneration-related protein 2 (CDR2) (Gallus gallus (Chicken)).